The following is a 239-amino-acid chain: MADS-box transcription factor 34 (239 aa).

The MADS-box domain maps to Met1–Ser61. The 91-residue stretch at Met88 to Glu178 folds into the K-box domain. The tract at residues Ala179–Pro208 is disordered.

As to expression, highly expressed in leaves and at low levels in roots and spikelets (rice flower).

Its subcellular location is the nucleus. Functionally, probable transcription factor. The polypeptide is MADS-box transcription factor 34 (MADS34) (Oryza sativa subsp. japonica (Rice)).